A 247-amino-acid chain; its full sequence is UPF0659 protein C216.03 (247 aa).

This sequence belongs to the UPF0659 family.

The protein localises to the cytoplasm. It localises to the nucleus. The polypeptide is UPF0659 protein C216.03 (Schizosaccharomyces pombe (strain 972 / ATCC 24843) (Fission yeast)).